A 190-amino-acid chain; its full sequence is uncharacterized protein (190 aa).

The protein to Synechocystis PCC 6803 sll1609 and slr1290.

This is an uncharacterized protein from Synechocystis sp. (strain ATCC 27184 / PCC 6803 / Kazusa).